The primary structure comprises 850 residues: Elongation factor 2 (850 aa).

Residues 17–351 form the tr-type G domain; the sequence is KNIRNISVIA…QIALKLPSPL (335 aa). GTP contacts are provided by residues 26–33, 159–162, and 213–215; these read AHVDHGKS, NKLD, and SGL. Residue histidine 707 is modified to Diphthamide.

Belongs to the TRAFAC class translation factor GTPase superfamily. Classic translation factor GTPase family. EF-G/EF-2 subfamily.

The protein resides in the cytoplasm. The enzyme catalyses GTP + H2O = GDP + phosphate + H(+). Its pathway is protein biosynthesis; polypeptide chain elongation. In terms of biological role, catalyzes the GTP-dependent ribosomal translocation step during translation elongation. During this step, the ribosome changes from the pre-translocational (PRE) to the post-translocational (POST) state as the newly formed A-site-bound peptidyl-tRNA and P-site-bound deacylated tRNA move to the P and E sites, respectively. Catalyzes the coordinated movement of the two tRNA molecules, the mRNA and conformational changes in the ribosome. The polypeptide is Elongation factor 2 (EFT1) (Encephalitozoon cuniculi (strain GB-M1) (Microsporidian parasite)).